A 177-amino-acid polypeptide reads, in one-letter code: ATP synthase subunit delta (177 aa).

Belongs to the ATPase delta chain family. In terms of assembly, F-type ATPases have 2 components, F(1) - the catalytic core - and F(0) - the membrane proton channel. F(1) has five subunits: alpha(3), beta(3), gamma(1), delta(1), epsilon(1). F(0) has three main subunits: a(1), b(2) and c(10-14). The alpha and beta chains form an alternating ring which encloses part of the gamma chain. F(1) is attached to F(0) by a central stalk formed by the gamma and epsilon chains, while a peripheral stalk is formed by the delta and b chains.

It is found in the cell inner membrane. Functionally, f(1)F(0) ATP synthase produces ATP from ADP in the presence of a proton or sodium gradient. F-type ATPases consist of two structural domains, F(1) containing the extramembraneous catalytic core and F(0) containing the membrane proton channel, linked together by a central stalk and a peripheral stalk. During catalysis, ATP synthesis in the catalytic domain of F(1) is coupled via a rotary mechanism of the central stalk subunits to proton translocation. This protein is part of the stalk that links CF(0) to CF(1). It either transmits conformational changes from CF(0) to CF(1) or is implicated in proton conduction. This is ATP synthase subunit delta from Sulfurimonas denitrificans (strain ATCC 33889 / DSM 1251) (Thiomicrospira denitrificans (strain ATCC 33889 / DSM 1251)).